The chain runs to 46 residues: Large ribosomal subunit protein bL34c (46 aa).

It belongs to the bacterial ribosomal protein bL34 family.

It localises to the plastid. The protein localises to the chloroplast. This is Large ribosomal subunit protein bL34c (rpl34) from Guillardia theta (Cryptophyte).